Reading from the N-terminus, the 462-residue chain is Squalene synthase ERG9 (462 aa).

A helical membrane pass occupies residues 406–426; it reads AVVLFGVVIAALVCISGLMLG.

The protein belongs to the phytoene/squalene synthase family. The cofactor is Mg(2+).

It is found in the endoplasmic reticulum membrane. It localises to the microsome. It carries out the reaction 2 (2E,6E)-farnesyl diphosphate + NADPH + H(+) = squalene + 2 diphosphate + NADP(+). The catalysed reaction is 2 (2E,6E)-farnesyl diphosphate + NADH + H(+) = squalene + 2 diphosphate + NAD(+). It participates in terpene metabolism; lanosterol biosynthesis; lanosterol from farnesyl diphosphate: step 1/3. Its pathway is steroid metabolism; ergosterol biosynthesis. In terms of biological role, squalene synthase; part of the third module of ergosterol biosynthesis pathway that includes the late steps of the pathway. ERG9 produces squalene from 2 farnesyl pyrophosphate moieties. The third module or late pathway involves the ergosterol synthesis itself through consecutive reactions that mainly occur in the endoplasmic reticulum (ER) membrane. Firstly, the squalene synthase ERG9 catalyzes the condensation of 2 farnesyl pyrophosphate moieties to form squalene, which is the precursor of all steroids. Squalene synthase is crucial for balancing the incorporation of farnesyl diphosphate (FPP) into sterol and nonsterol isoprene synthesis. Secondly, squalene is converted into lanosterol by the consecutive action of the squalene epoxidase ERG1 and the lanosterol synthase ERG7. Then, the delta(24)-sterol C-methyltransferase ERG6 methylates lanosterol at C-24 to produce eburicol. Eburicol is the substrate of the sterol 14-alpha demethylase encoded by CYP51A, CYP51B and CYP51C, to yield 4,4,24-trimethyl ergosta-8,14,24(28)-trienol. CYP51B encodes the enzyme primarily responsible for sterol 14-alpha-demethylation, and plays an essential role in ascospore formation. CYP51A encodes an additional sterol 14-alpha-demethylase, induced on ergosterol depletion and responsible for the intrinsic variation in azole sensitivity. The third CYP51 isoform, CYP51C, does not encode a sterol 14-alpha-demethylase, but is required for full virulence on host wheat ears. The C-14 reductase ERG24 then reduces the C14=C15 double bond which leads to 4,4-dimethylfecosterol. A sequence of further demethylations at C-4, involving the C-4 demethylation complex containing the C-4 methylsterol oxidases ERG25, the sterol-4-alpha-carboxylate 3-dehydrogenase ERG26 and the 3-keto-steroid reductase ERG27, leads to the production of fecosterol via 4-methylfecosterol. ERG28 has a role as a scaffold to help anchor ERG25, ERG26 and ERG27 to the endoplasmic reticulum. The C-8 sterol isomerase ERG2 then catalyzes the reaction which results in unsaturation at C-7 in the B ring of sterols and thus converts fecosterol to episterol. The sterol-C5-desaturases ERG3A and ERG3BB then catalyze the introduction of a C-5 double bond in the B ring to produce 5-dehydroepisterol. The C-22 sterol desaturases ERG5A and ERG5B further convert 5-dehydroepisterol into ergosta-5,7,22,24(28)-tetraen-3beta-ol by forming the C-22(23) double bond in the sterol side chain. Finally, ergosta-5,7,22,24(28)-tetraen-3beta-ol is substrate of the C-24(28) sterol reductase ERG4 to produce ergosterol. The polypeptide is Squalene synthase ERG9 (Gibberella zeae (strain ATCC MYA-4620 / CBS 123657 / FGSC 9075 / NRRL 31084 / PH-1) (Wheat head blight fungus)).